The primary structure comprises 348 residues: uncharacterized protein (348 aa).

It belongs to the Mu gp47/PBSX XkdT family.

This is an uncharacterized protein from Bacillus subtilis (strain 168).